Reading from the N-terminus, the 108-residue chain is UPF0060 membrane protein YnfA (108 aa).

Topologically, residues 1–5 (MLKTT) are periplasmic. A helical membrane pass occupies residues 6–26 (LLFFVTALCEIIGCFLPWLWI). Topologically, residues 27 to 30 (KRGA) are cytoplasmic. Residues 31–51 (SVWWLLPAAASLALFVWLLTL) form a helical membrane-spanning segment. The Periplasmic segment spans residues 52–60 (HPAASGRVY). Residues 61–81 (AAYGGVYVCTALLWLRVVDGV) form a helical membrane-spanning segment. The Cytoplasmic segment spans residues 82-84 (RLT). The chain crosses the membrane as a helical span at residues 85–105 (VYDWSGALIALCGMLIIVVGW). At 106–108 (GRT) the chain is on the periplasmic side.

Belongs to the UPF0060 family.

It is found in the cell inner membrane. This is UPF0060 membrane protein YnfA from Salmonella typhi.